A 520-amino-acid chain; its full sequence is Serine protease Hip1 (520 aa).

The N-terminal stretch at 1-30 (MGMRLSRRDKIARMLLIWAALAAVALVLVG) is a signal peptide. A lipid anchor (N-palmitoyl cysteine) is attached at C31. Residue C31 is the site of S-diacylglycerol cysteine attachment. Positions 102-497 (GSLVINPGGP…TQHTVVFQGD (396 aa)) constitute an AB hydrolase-1 domain. S228 functions as the Nucleophile in the catalytic mechanism. Residue D463 is part of the active site. H490 acts as the Proton donor in catalysis.

This sequence belongs to the peptidase S33 family.

It is found in the cell envelope. It localises to the cell membrane. Functionally, serine protease that promotes pathogenesis by promoting the processing and the extracellular release of the M.bovis heat-shock protein GroEL2. In terms of biological role, key immunomodulatory virulence factor, which promotes survival in host macrophages and modulates host immune responses. This chain is Serine protease Hip1, found in Mycobacterium bovis (strain ATCC BAA-935 / AF2122/97).